The primary structure comprises 135 residues: Histone H1, macronuclear (135 aa).

Residues 1-17 are compositionally biased toward low complexity; the sequence is MPAKTATAVKRTTTTKK. Residues 1–135 form a disordered region; it reads MPAKTATAVK…GGKKKSAKKN (135 aa). 2 stretches are compositionally biased toward basic residues: residues 18-54 and 62-79; these read SAAK…RRTP and KATK…RSAT. Positions 80-112 are enriched in low complexity; sequence KKTTAAPAAAAAPATDAPAAAATPSKATGSAKK. A compositionally biased stretch (basic residues) spans 113 to 135; sequence ASARKSSAKKPAKGGKKKSAKKN.

The protein resides in the nucleus. It is found in the chromosome. Functionally, histones H1 are necessary for the condensation of nucleosome chains into higher-order structures. The polypeptide is Histone H1, macronuclear (Euplotes eurystomus (Ciliate)).